The sequence spans 120 residues: NAD(P)H-quinone oxidoreductase subunit 3, chloroplastic (120 aa).

3 helical membrane-spanning segments follow: residues 9 to 29 (IFWA…FISG), 64 to 84 (MFAL…PWAM), and 88 to 108 (VLGV…IVGL).

The protein belongs to the complex I subunit 3 family. As to quaternary structure, NDH is composed of at least 16 different subunits, 5 of which are encoded in the nucleus.

The protein localises to the plastid. The protein resides in the chloroplast thylakoid membrane. It carries out the reaction a plastoquinone + NADH + (n+1) H(+)(in) = a plastoquinol + NAD(+) + n H(+)(out). It catalyses the reaction a plastoquinone + NADPH + (n+1) H(+)(in) = a plastoquinol + NADP(+) + n H(+)(out). In terms of biological role, NDH shuttles electrons from NAD(P)H:plastoquinone, via FMN and iron-sulfur (Fe-S) centers, to quinones in the photosynthetic chain and possibly in a chloroplast respiratory chain. The immediate electron acceptor for the enzyme in this species is believed to be plastoquinone. Couples the redox reaction to proton translocation, and thus conserves the redox energy in a proton gradient. This chain is NAD(P)H-quinone oxidoreductase subunit 3, chloroplastic, found in Guizotia abyssinica (Niger).